Consider the following 378-residue polypeptide: Fructose-1,6-bisphosphatase class 1 2 (378 aa).

4 residues coordinate Mg(2+): Glu98, Asp120, Leu122, and Asp123. Residues Asp123–Ser126 and Asn227 each bind substrate. Glu299 contributes to the Mg(2+) binding site.

It belongs to the FBPase class 1 family. As to quaternary structure, homotetramer. Mg(2+) is required as a cofactor.

Its subcellular location is the cytoplasm. The enzyme catalyses beta-D-fructose 1,6-bisphosphate + H2O = beta-D-fructose 6-phosphate + phosphate. It functions in the pathway carbohydrate biosynthesis; gluconeogenesis. The chain is Fructose-1,6-bisphosphatase class 1 2 from Paraburkholderia xenovorans (strain LB400).